The following is a 358-amino-acid chain: Nicotinate-nucleotide--dimethylbenzimidazole phosphoribosyltransferase (358 aa).

The active-site Proton acceptor is the glutamate 323.

Belongs to the CobT family.

The enzyme catalyses 5,6-dimethylbenzimidazole + nicotinate beta-D-ribonucleotide = alpha-ribazole 5'-phosphate + nicotinate + H(+). It participates in nucleoside biosynthesis; alpha-ribazole biosynthesis; alpha-ribazole from 5,6-dimethylbenzimidazole: step 1/2. In terms of biological role, catalyzes the synthesis of alpha-ribazole-5'-phosphate from nicotinate mononucleotide (NAMN) and 5,6-dimethylbenzimidazole (DMB). This chain is Nicotinate-nucleotide--dimethylbenzimidazole phosphoribosyltransferase, found in Oleidesulfovibrio alaskensis (strain ATCC BAA-1058 / DSM 17464 / G20) (Desulfovibrio alaskensis).